Here is a 251-residue protein sequence, read N- to C-terminus: Imidazole glycerol phosphate synthase subunit HisF (251 aa).

Active-site residues include aspartate 11 and aspartate 130.

This sequence belongs to the HisA/HisF family. Heterodimer of HisH and HisF.

The protein resides in the cytoplasm. It catalyses the reaction 5-[(5-phospho-1-deoxy-D-ribulos-1-ylimino)methylamino]-1-(5-phospho-beta-D-ribosyl)imidazole-4-carboxamide + L-glutamine = D-erythro-1-(imidazol-4-yl)glycerol 3-phosphate + 5-amino-1-(5-phospho-beta-D-ribosyl)imidazole-4-carboxamide + L-glutamate + H(+). It functions in the pathway amino-acid biosynthesis; L-histidine biosynthesis; L-histidine from 5-phospho-alpha-D-ribose 1-diphosphate: step 5/9. Functionally, IGPS catalyzes the conversion of PRFAR and glutamine to IGP, AICAR and glutamate. The HisF subunit catalyzes the cyclization activity that produces IGP and AICAR from PRFAR using the ammonia provided by the HisH subunit. The polypeptide is Imidazole glycerol phosphate synthase subunit HisF (Listeria monocytogenes serotype 4b (strain CLIP80459)).